The following is a 428-amino-acid chain: Immunoglobulin superfamily containing leucine-rich repeat protein (428 aa).

The first 18 residues, 1–18, serve as a signal peptide directing secretion; the sequence is MRALCLLCWAVLLNLVRA. An LRRNT domain is found at 19–50; the sequence is CPEPCDCGEKYGFQIADCAYRDLEGVPPGFPA. Residue asparagine 51 is glycosylated (N-linked (GlcNAc...) asparagine). LRR repeat units follow at residues 51 to 72, 75 to 98, 99 to 122, 123 to 144, and 147 to 168; these read NVTT…AFRE, LLQS…APLS, HLKS…HNLS, ALQL…AFSS, and ALRS…TFAP. In terms of domain architecture, LRRCT spans 180-231; the sequence is NPFDCTCGIVWFKTWALASAVSIPEQDNIACTTPHVLKGIPLGRLPPLPCSA. Positions 232–343 constitute an Ig-like domain; sequence PSVQLSYQPS…GSAESSVNVA (112 aa). The cysteines at positions 257 and 327 are disulfide-linked. An N-linked (GlcNAc...) asparagine glycan is attached at asparagine 309.

As to expression, detected in thyroid, heart, retina and spinal cord.

Its subcellular location is the secreted. This Mus musculus (Mouse) protein is Immunoglobulin superfamily containing leucine-rich repeat protein (Islr).